The chain runs to 440 residues: uncharacterized protein (440 aa).

10 helical membrane passes run Asn-26–Phe-46, Phe-59–Leu-79, Phe-96–Lys-116, Leu-138–Leu-158, Phe-211–Ala-231, Leu-241–Ile-261, Trp-263–Phe-283, Trp-284–Ile-304, Phe-394–Ile-414, and Ile-418–Ile-438.

It to M.pneumoniae MPN_087.

It is found in the cell membrane. This is an uncharacterized protein from Mycoplasma pneumoniae (strain ATCC 29342 / M129 / Subtype 1) (Mycoplasmoides pneumoniae).